Here is a 183-residue protein sequence, read N- to C-terminus: MSIQEHVILVNDQGEVVGTQEKYAAHTSHTSLHLAFSSWLFNDRGQCLVTRRALSKIAWPGVWTNSVCGHPQIGETTEQAIARRCRFEVGVEIAQLTPIAADFRYCEIDPSGIVENEICPVFAAQIVSPLKVNPDEVMDYQWVELTSLLRALEATPWAFSPWMVSEAANASEKLKHFADNVKA.

2 residues coordinate Mn(2+): His26 and His33. Positions 31-165 (SLHLAFSSWL…PWAFSPWMVS (135 aa)) constitute a Nudix hydrolase domain. Residue Cys68 is part of the active site. His70 serves as a coordination point for Mn(2+). Glu88 serves as a coordination point for Mg(2+). Glu115 and Glu117 together coordinate Mn(2+). Glu117 is a catalytic residue.

It belongs to the IPP isomerase type 1 family. Homodimer. Mg(2+) is required as a cofactor. Requires Mn(2+) as cofactor.

The protein resides in the cytoplasm. The catalysed reaction is isopentenyl diphosphate = dimethylallyl diphosphate. The protein operates within isoprenoid biosynthesis; dimethylallyl diphosphate biosynthesis; dimethylallyl diphosphate from isopentenyl diphosphate: step 1/1. In terms of biological role, catalyzes the 1,3-allylic rearrangement of the homoallylic substrate isopentenyl (IPP) to its highly electrophilic allylic isomer, dimethylallyl diphosphate (DMAPP). In Enterobacter sp. (strain 638), this protein is Isopentenyl-diphosphate Delta-isomerase.